Here is a 251-residue protein sequence, read N- to C-terminus: 5'-nucleotidase SurE (251 aa).

A divalent metal cation contacts are provided by Asp8, Asp9, Ser39, and Asn90.

This sequence belongs to the SurE nucleotidase family. Requires a divalent metal cation as cofactor.

The protein resides in the cytoplasm. The catalysed reaction is a ribonucleoside 5'-phosphate + H2O = a ribonucleoside + phosphate. Its function is as follows. Nucleotidase that shows phosphatase activity on nucleoside 5'-monophosphates. The protein is 5'-nucleotidase SurE of Colwellia psychrerythraea (strain 34H / ATCC BAA-681) (Vibrio psychroerythus).